Reading from the N-terminus, the 301-residue chain is MEKFFSPSRHNYADLSPTDVPASEESDEALEEKQFEYFQQRQHRRLVLVNRLLAASTVALVMVSLWLGWELHTAKFGSMGSFQYGFKYELEAAKKVIKLEEYKFLGSPIFLDDGTELVPEPTPGPMKTLGVTDMYVGEPSKELDWNWNQLHWGRFFLLTEDEARQAWGPGYKEYWAENEGGYIAGLEVTHSVHCVDMLRKALRRDVYPLDSPLHGPIHTDHCLNHLRQMILCQGDLTPIPSKYYRGITDNYIFGDMPHTCRNWDSVREFITDRFNGSSAVPLAPGTVLSDPYKKLLGILDE.

The segment at Met1–Ser26 is disordered. Residues Val47–Trp69 form a helical membrane-spanning segment. 2 consecutive short sequence motifs (HXXHC) follow at residues Thr189–Cys194 and His218–Cys222. A glycan (N-linked (GlcNAc...) asparagine) is linked at Asn275.

Belongs to the ustYa family.

The protein resides in the membrane. Its pathway is mycotoxin biosynthesis. UstYa family oxidase; part of the gene cluster that mediates the biosynthesis of the phomopsins, a group of hexapeptide mycotoxins which infects lupins and causes lupinosis disease in livestock. Within the pathway, phomYd catalyzes the desaturation of the Asp moiety into 2,3-dehydroaspartic acid (dAsp). The pathway starts with the processing of the precursor phomA by several endopeptidases including kexin proteases as well as the cluster-specific S41 family peptidase phomP1 and the oligopeptidase phomG to produce 10 identical copies of the hexapeptide Tyr-Val-Ile-Pro-Ile-Asp. After being excised from the precursor peptide, the core peptides are cyclized and modified post-translationally by enzymes encoded within the gene cluster. The timing and order of proteolysis of the phomA precursor and PTMs are still unknown. Two tyrosinase-like enzymes, phomQ1 and phomQ2, catalyze the chlorination and hydroxylation of Tyr, respectively. PhomYb, is proposed to be involved in the construction of the macrocyclic structure. The other 4 ustYa family proteins may be involved in PTMs that generate the unique structure of phomopsin A. PhomYa is required for the hydroxylation of C-beta of Tyr. PhomYc, phomYd, and phomYe are responsible for the biosynthesis of 2,3-dehydroisoleucine (dIle), 2,3-dehydroaspartic acid (dAsp), and 3,4-dehydroproline (dPro), respectively. While dIle formation by phomYc is indispensable for the installation of dAsp by phomYd, the order of the other PTMs have not been elucidated yet. Most of the biosynthetic enzymes likely have broad substrate specificity, and thus, there might be a metabolic grid from a precursor to phomopsin A. The enzyme(s) responsible for the biosynthesis of 3,4-dehydrovaline (dVal) have also not been identified yet. Finally, phomM acts as an S-adenosylmethionine-dependent alpha-N-methyltransferase that catalyzes two successive N-methylation reactions, converting N-desmethyl-phomopsin A to phomopsin A and phomopsin A further to an N,N-dimethylated congener called phomopsin E. The chain is UstYa family oxidase phomYd from Diaporthe leptostromiformis (Lupinosis disease fungus).